A 383-amino-acid polypeptide reads, in one-letter code: Putative gustatory receptor 22c (383 aa).

Over Met-1–Arg-11 the chain is Cytoplasmic. The chain crosses the membrane as a helical span at residues Leu-12 to Tyr-32. Residues Arg-33–Arg-45 are Extracellular-facing. Residues Phe-46–Gly-66 traverse the membrane as a helical segment. The Cytoplasmic segment spans residues Gly-67 to His-86. Residues Tyr-87–Gly-107 traverse the membrane as a helical segment. The Extracellular portion of the chain corresponds to Ser-108–Lys-144. N-linked (GlcNAc...) asparagine glycosylation occurs at Asn-130. The helical transmembrane segment at Trp-145–Asn-165 threads the bilayer. At Asn-166–Met-250 the chain is on the cytoplasmic side. A helical transmembrane segment spans residues Thr-251–Leu-271. At Asp-272–Phe-279 the chain is on the extracellular side. Residues Ile-280–Ile-300 form a helical membrane-spanning segment. The Cytoplasmic segment spans residues Ala-301–Met-360. Residues Gly-361–Met-381 traverse the membrane as a helical segment. Topologically, residues Asn-382–Leu-383 are extracellular.

It belongs to the insect chemoreceptor superfamily. Gustatory receptor (GR) family. Gr22e subfamily. As to expression, taste bristles in the foreleg and labial palps.

Its subcellular location is the cell membrane. Functionally, probable gustatory receptor which mediates acceptance or avoidance behavior, depending on its substrates. The polypeptide is Putative gustatory receptor 22c (Gr22c) (Drosophila melanogaster (Fruit fly)).